Reading from the N-terminus, the 271-residue chain is Putative protein FAM220BP (271 aa).

The sequence is that of Putative protein FAM220BP (FAM220BP) from Homo sapiens (Human).